The sequence spans 181 residues: Adenylate kinase (181 aa).

Position 7–15 (7–15 (GVAGVGKTT)) interacts with ATP.

This sequence belongs to the archaeal adenylate kinase family.

It is found in the cytoplasm. The catalysed reaction is AMP + ATP = 2 ADP. The protein is Adenylate kinase (adkA) of Thermoplasma volcanium (strain ATCC 51530 / DSM 4299 / JCM 9571 / NBRC 15438 / GSS1).